Reading from the N-terminus, the 519-residue chain is ATP synthase subunit beta (519 aa).

Residues 1-26 (MAKAATPKRAPARAAAIPAAATPAAK) show a composition bias toward low complexity. Positions 1–40 (MAKAATPKRAPARAAAIPAAATPAAKPAKRASTRSAAARS) are disordered. 197–204 (GGAGVGKT) provides a ligand contact to ATP.

The protein belongs to the ATPase alpha/beta chains family. In terms of assembly, F-type ATPases have 2 components, CF(1) - the catalytic core - and CF(0) - the membrane proton channel. CF(1) has five subunits: alpha(3), beta(3), gamma(1), delta(1), epsilon(1). CF(0) has three main subunits: a(1), b(2) and c(9-12). The alpha and beta chains form an alternating ring which encloses part of the gamma chain. CF(1) is attached to CF(0) by a central stalk formed by the gamma and epsilon chains, while a peripheral stalk is formed by the delta and b chains.

Its subcellular location is the cell inner membrane. The enzyme catalyses ATP + H2O + 4 H(+)(in) = ADP + phosphate + 5 H(+)(out). Functionally, produces ATP from ADP in the presence of a proton gradient across the membrane. The catalytic sites are hosted primarily by the beta subunits. The polypeptide is ATP synthase subunit beta (Chelativorans sp. (strain BNC1)).